The following is a 529-amino-acid chain: N5-hydroxyornithine acetylase sidL (529 aa).

Disordered regions lie at residues 59 to 95 (ASVN…VRPF) and 239 to 258 (SPWP…SPVA). His-462 is a binding site for substrate. Glu-498 (proton acceptor) is an active-site residue.

It belongs to the lysine N-acyltransferase mbtK family.

It localises to the cytoplasm. Its subcellular location is the cytosol. Its pathway is siderophore biosynthesis. Acyltransferase; part of the gene cluster that mediates the biosynthesis of at least 11 siderophores, including beauverichelin A, dimerumic acid (DA), Na-dimethyl coprogen (NADC), eleutherazine B, ferricrocin (FC), fusarinine A, fusarinine C (FsC), metachelin A, mevalonolactone, rhodotorulic acid (RA) and tenellin. This cocktail of siderophores for iron metabolism is essential for virulence, and more specifically for the fungal virulence in penetrating through the host cuticle. Siderophore synthesis is also involved in conidial germination under iron-deficient conditions. SIDL contributes to partial production of ferricrocin under iron-limiting conditions via the acetylation of N(5)-hydroxyornithine. The chain is N5-hydroxyornithine acetylase sidL from Beauveria bassiana (strain ARSEF 2860) (White muscardine disease fungus).